The sequence spans 78 residues: RNA-binding protein Hfq (78 aa).

The 60-residue stretch at D10–V69 folds into the Sm domain.

It belongs to the Hfq family. Homohexamer.

RNA chaperone that binds small regulatory RNA (sRNAs) and mRNAs to facilitate mRNA translational regulation in response to envelope stress, environmental stress and changes in metabolite concentrations. Also binds with high specificity to tRNAs. The protein is RNA-binding protein Hfq of Paraburkholderia phytofirmans (strain DSM 17436 / LMG 22146 / PsJN) (Burkholderia phytofirmans).